The primary structure comprises 181 residues: MATVNGYTGNTPAATTPAATGSKQSAPPTKTVDSHSVLKRLQSELMGLMMGADPGISAFPEEDNIFCWKGTITGSKDTVFEGTEYRLSLTFSNDYPFKSPKVKFETCCFHPNVDLYGNICLDILQDKWSSAYDVRTILLSIQSLLGEPNISSPLNNQAAQLWSNQEEYRKMVEKLYKPLNA.

The span at M1–N10 shows a compositional bias: polar residues. The tract at residues M1 to D33 is disordered. Residues T11–T20 are compositionally biased toward low complexity. The UBC core domain occupies S36 to A181. C120 serves as the catalytic Glycyl thioester intermediate.

The protein belongs to the ubiquitin-conjugating enzyme family. In terms of assembly, interacts with OR. Binds to LOT1. In terms of tissue distribution, expressed in all tissues with cell division activities and in mature leaves.

It is found in the cytoplasm. The protein resides in the nucleus. The enzyme catalyses S-ubiquitinyl-[E1 ubiquitin-activating enzyme]-L-cysteine + [E2 ubiquitin-conjugating enzyme]-L-cysteine = [E1 ubiquitin-activating enzyme]-L-cysteine + S-ubiquitinyl-[E2 ubiquitin-conjugating enzyme]-L-cysteine.. It participates in protein modification; protein ubiquitination. Functionally, accepts the ubiquitin from the E1 complex and catalyzes its covalent attachment to other proteins. Part of the anaphase-promoting complex (APC). May have a key function during cell cycle and be involved in cyclin B1 degradation. Triggers OR ubiquitination that mediates its subsequent nuclear localization. Involved in the repression of early light-induced proteins (ELIPs, e.g. ELIP1 and ELIP2) expression, probably via OR nuclear relocalization. This Arabidopsis thaliana (Mouse-ear cress) protein is Ubiquitin-conjugating enzyme E2 19.